We begin with the raw amino-acid sequence, 1687 residues long: MDVNSRLSVQSNVESPLMHEGPEPQQITSSAAGNLAGSITACKKVLRSNSLLESTDYWLQNQRTPCQIGFVEDESENCASVCFVNLDVNKDACITENLQQKLVNVSPDLPNLISSMNVQQPKENEIVLLSGLASGNPQADFDVSQCPWLPDICLVQCARGNRPNSTNCIIFEINKFLIGLEVVQERQLHLETNVLKLEDDTNCSLSSIEEDFLTASEHLEEEIEVDDCRSGLENTNVSANVLESKKPKETTQEGWDYHKEKLHCALGEKHIRKHRTPSTKTEGSKENTEENTSLKSLNRLVRPSHLKSEVAGNKQLATNYSYPENIKGELETSQMLFIPRDAYLSMVKKDVLSPCSVLSEQGGSHRDHDVTPNPLPPVQNGEASTGEYATNLAESVMQDAFIRLSQSQPTLPQESAVSFSMRSALLPSGCCTKDMVVPRSWNELPKIVIVQSPDGSDTVPEPNVSSWPDMEFVETSGIFSADSSSRPTQSALEVALACAATVIGTISSPQATERFAMEQESLVSTYAQRGTGVQQTQVPQAFMAPSTTEYSFPSALCGMTQVASAVAVCGLCEKEEATCPVAPTDLLPTSGASEEISSIGSLVMERSTELGKEAIAEALLREATLILARPDAYSSLGELLESVNQRIIETTSKTQTLCTESVQRNELAHTLSNVILKHSVDELHQKTTMAHPTDERHPCGTLDTLMESVNQLLHNVICFTFKKMNHIVTLSEHPSFDQAAGQAWVKAFACPSSQPLSNAHGTGLVIRNLVEDASPKSNKGGARPELVNNPRLQSEFSCSHRMFDSTAKSFPKEIYLKGIMGEDTRNPHHTLNYDSNERRASTDLGKLTTASEGCSGFQETEDSIVPNTQEKYICATPLNNEAQVNLSLLGDDLSVPAQSTLEAKQSEVYGITDFAEELAETVVSMATEIAAICLDNSNGKQPWFCAWKRGNEFLTAPNGSCRSLKRKKENSSAGSTVRKHKPPRLSEIKRKADEHPELKEKLMNRVMDESMNLEDIPDSVSTFANEVAAKIMNLTEFSMVDGVWQGQSCSRTRLLGGDRWNRLKASSCESIPEEDSEARVFVNSLGLMSTLSQPVSRASSVSKQSSCESITDEFSRFMVKQMENEGRGFELLLDYYAGKNASSIMSSAMQQACQKNDHLNVRPSCPSKQSSTESITEEFYRYMLRDIAKESKDGASSRRSSHDWTTGLLSPSTRSPLCYRQSSMPDSRSPCSRLTVNAPVKANSLDGFAQNCPQDSVNVQPVSRASSSGLCKSDSCLYRRSGTDQITNMLIHETWASSIEALMRKNKIIADDSEAANASPGPVSSGSPLQVEKNANRLATSKGHRGPTLLVQESVDYQRKDAVTEGNHSPVSSPGKTAPVKKPSDFDPRRETSACHNAAGLNSPRRSLCSRDVPLIQIETDQKEECIGEPGPFLSQSGSLEETEGHQPEETIPDVARNEDTAPSTCQSSRDSLETSGEVEVEVLKEDIPRDESRNPPSSSEESTGSWSQLANEEDIPDDTSSFLQLSERSMSNGNSSGTSSLGIMDLDIYQESIPSSPMINELVEEKEILKEQSESIKEHASGLPGRAASPQRSLLVINFDLEPECPDAELRATLQWIAASELGIPTIYFKKSQESRIEKFLDVVKLVQQKSWKVGDIFHAVVQYCKLHAEQKERTPSLFDWLLELG.

The segment covering 1 to 14 has biased composition (polar residues); sequence MDVNSRLSVQSNVE. 2 disordered regions span residues 1–25 and 272–293; these read MDVN…PEPQ and RKHR…ENTS. Residues 914-931 form a PKA-RII subunit binding domain region; that stretch reads FAEELAETVVSMATEIAA. Residues 964 to 989 are disordered; it reads LKRKKENSSAGSTVRKHKPPRLSEIK. A phosphoserine mark is found at serine 1010, serine 1070, serine 1092, serine 1105, serine 1106, serine 1109, serine 1244, and serine 1273. 2 disordered regions span residues 1363–1406 and 1421–1520; these read VTEG…SPRR and DQKE…PDDT. Residues 1366–1375 are compositionally biased toward polar residues; it reads GNHSPVSSPG. Over residues 1382–1393 the composition is skewed to basic and acidic residues; the sequence is KPSDFDPRRETS. Positions 1461–1470 are enriched in polar residues; that stretch reads TAPSTCQSSR. Residues 1482 to 1494 are compositionally biased toward basic and acidic residues; sequence EVLKEDIPRDESR. Over residues 1495 to 1508 the composition is skewed to low complexity; that stretch reads NPPSSSEESTGSWS.

The protein belongs to the AKAP110 family. Interacts (via the PKA-RII subunit binding domain) with the RI subunit of PKA. Interacts with SPHK1; the interaction greatly reduces SPHK1 activity.

The protein resides in the cytoplasm. In terms of biological role, anchoring protein that binds preferentially to the type I regulatory subunit of c-AMP-dependent protein kinase (PKA type I) and targets it to distinct subcellular compartments. May act as a converging factor linking cAMP and sphingosine signaling pathways. Plays a regulatory role in the modulation of SPHK1. The chain is A-kinase anchor protein SPHKAP (Sphkap) from Mus musculus (Mouse).